Reading from the N-terminus, the 560-residue chain is Membrane protein insertase YidC (560 aa).

A helical membrane pass occupies residues 1 to 21; sequence MDIKRTILIAALAVVSYVMVL. Residues 42 to 66 are disordered; sequence VAPGLPDGVPAGNNGASADVPSANA. A run of 5 helical transmembrane segments spans residues 341 to 361, 367 to 387, 437 to 457, 468 to 488, and 515 to 535; these read LELT…FWLL, LLGN…GLFF, LGGC…YWVL, WMLW…PIIM, and PIIF…YWVV.

It belongs to the OXA1/ALB3/YidC family. Type 1 subfamily. As to quaternary structure, interacts with the Sec translocase complex via SecD. Specifically interacts with transmembrane segments of nascent integral membrane proteins during membrane integration.

The protein resides in the cell inner membrane. Functionally, required for the insertion and/or proper folding and/or complex formation of integral membrane proteins into the membrane. Involved in integration of membrane proteins that insert both dependently and independently of the Sec translocase complex, as well as at least some lipoproteins. Aids folding of multispanning membrane proteins. The chain is Membrane protein insertase YidC from Pseudomonas putida (strain GB-1).